The primary structure comprises 186 residues: Translation initiation factor IF-3 (186 aa).

This sequence belongs to the IF-3 family. Monomer.

The protein resides in the cytoplasm. Functionally, IF-3 binds to the 30S ribosomal subunit and shifts the equilibrium between 70S ribosomes and their 50S and 30S subunits in favor of the free subunits, thus enhancing the availability of 30S subunits on which protein synthesis initiation begins. The protein is Translation initiation factor IF-3 of Chlamydia muridarum (strain MoPn / Nigg).